A 1679-amino-acid chain; its full sequence is Maestro heat-like repeat-containing protein family member 2A (1679 aa).

HEAT repeat units follow at residues 68–91 (ATTD…ISTQ), 92–128 (RKMN…QMRD), 190–229 (MPYM…TVQF), 293–313 (EQVY…GHWP), 314–350 (LFPS…ELHV), 380–417 (SYPK…ADDP), 422–459 (KTIY…SGFQ), 571–610 (PAPQ…SIAP), 614–654 (DMWE…SLKK), 737–774 (KTVL…ETVK), 848–887 (SALT…MKPF), 991–1028 (GQFG…LHVS), 1219–1261 (DPLM…SHGP), 1387–1425 (KLLR…GAPR), and 1632–1669 (MDLV…CNQH).

This is Maestro heat-like repeat-containing protein family member 2A (Mroh2a) from Mus musculus (Mouse).